The chain runs to 476 residues: Aspartyl/glutamyl-tRNA(Asn/Gln) amidotransferase subunit B (476 aa).

Belongs to the GatB/GatE family. GatB subfamily. Heterotrimer of A, B and C subunits.

It catalyses the reaction L-glutamyl-tRNA(Gln) + L-glutamine + ATP + H2O = L-glutaminyl-tRNA(Gln) + L-glutamate + ADP + phosphate + H(+). The enzyme catalyses L-aspartyl-tRNA(Asn) + L-glutamine + ATP + H2O = L-asparaginyl-tRNA(Asn) + L-glutamate + ADP + phosphate + 2 H(+). In terms of biological role, allows the formation of correctly charged Asn-tRNA(Asn) or Gln-tRNA(Gln) through the transamidation of misacylated Asp-tRNA(Asn) or Glu-tRNA(Gln) in organisms which lack either or both of asparaginyl-tRNA or glutaminyl-tRNA synthetases. The reaction takes place in the presence of glutamine and ATP through an activated phospho-Asp-tRNA(Asn) or phospho-Glu-tRNA(Gln). The chain is Aspartyl/glutamyl-tRNA(Asn/Gln) amidotransferase subunit B from Lactobacillus gasseri (strain ATCC 33323 / DSM 20243 / BCRC 14619 / CIP 102991 / JCM 1131 / KCTC 3163 / NCIMB 11718 / NCTC 13722 / AM63).